Consider the following 240-residue polypeptide: MKMMDANEIISFIQKSEKKTPVKVYIKGDLKEVTFPETVQAFVNKKSGVLFGEWSEIKTILDENNKHIVDYVVENDRRNSAIPMLDLKGIKARIEPGAIIRDHVEIGDNAVIMMNATINIGAVIGEGSMIDMNAVLGGRATVGKNCHVGAGAVLAGVIEPPSAKPVIVEDDVVIGANVVVLEGVTVGKGAVVAAGAVVTEDVPPYTVVAGTPARVIKEIDEKTKAKTEIKQELRQLNPEK.

Belongs to the transferase hexapeptide repeat family. DapH subfamily.

It catalyses the reaction (S)-2,3,4,5-tetrahydrodipicolinate + acetyl-CoA + H2O = L-2-acetamido-6-oxoheptanedioate + CoA. Its pathway is amino-acid biosynthesis; L-lysine biosynthesis via DAP pathway; LL-2,6-diaminopimelate from (S)-tetrahydrodipicolinate (acetylase route): step 1/3. In terms of biological role, catalyzes the transfer of an acetyl group from acetyl-CoA to tetrahydrodipicolinate. This chain is 2,3,4,5-tetrahydropyridine-2,6-dicarboxylate N-acetyltransferase, found in Bacillus cereus (strain G9842).